Consider the following 273-residue polypeptide: MAIHLYKTSTPSTRNGAVDSQVKSNPRNNLIYGQHHCGKGRNARGIITAGHRGGGHKRLYRKIDFRRNEKDISGRIVTIEYDPNRNAYICLIHYGDGEKRYILHPRGAIIGDTIVSGTEVPISMGNALPLTDMPLGTAIHNIEITLGKGGQLARAAGAVAKLIAKEGKSATLRLPSGEVRLISKNCSATVGQVGNVGVNQKSLGRAGSKCWLGKRPVVRGVVMNPVDHPHGGGEGRSPIGRKKPTTPWGYPALGRRSRKRNKYSDSLILRRRK.

Disordered stretches follow at residues 1–22 (MAIHLYKTSTPSTRNGAVDSQV) and 224–273 (NPVD…RRRK).

This sequence belongs to the universal ribosomal protein uL2 family. As to quaternary structure, part of the 50S ribosomal subunit.

It localises to the plastid. The protein localises to the chloroplast. In Chloranthus spicatus (Chulantree), this protein is Large ribosomal subunit protein uL2cy (rpl2-B).